A 331-amino-acid chain; its full sequence is Malate dehydrogenase (331 aa).

Residue Gly-14–Gly-20 coordinates NAD(+). Substrate is bound by residues Arg-95 and Arg-101. Residues Asn-108, Gln-115, and Val-132 to Asn-134 contribute to the NAD(+) site. 2 residues coordinate substrate: Asn-134 and Arg-165. His-190 acts as the Proton acceptor in catalysis.

The protein belongs to the LDH/MDH superfamily. MDH type 2 family.

It catalyses the reaction (S)-malate + NAD(+) = oxaloacetate + NADH + H(+). Its function is as follows. Catalyzes the reversible oxidation of malate to oxaloacetate. The chain is Malate dehydrogenase from Rhodococcus opacus (strain B4).